The primary structure comprises 689 residues: Pentatricopeptide repeat-containing protein At1g71460, chloroplastic (689 aa).

The N-terminal 49 residues, methionine 1 to serine 49, are a transit peptide targeting the chloroplast. Residues leucine 16–serine 68 form a disordered region. Residues serine 38–proline 52 show a composition bias toward low complexity. PPR repeat units lie at residues asparagine 75–valine 109, asparagine 110–serine 144, asparagine 145–serine 175, asparagine 176–leucine 212, asparagine 213–asparagine 247, serine 248–valine 282, tryptophan 283–glutamate 309, asparagine 315–glutamate 350, glutamine 351–arginine 381, asparagine 382–proline 416, aspartate 417–proline 451, asparagine 452–arginine 482, asparagine 483–proline 517, aspartate 518–serine 552, isoleucine 553–lysine 583, glycine 584–proline 618, asparagine 619–methionine 649, and serine 655–threonine 689.

The protein belongs to the PPR family. PCMP-A subfamily.

The protein resides in the plastid. The protein localises to the chloroplast. This Arabidopsis thaliana (Mouse-ear cress) protein is Pentatricopeptide repeat-containing protein At1g71460, chloroplastic (PCMP-A3).